Here is a 611-residue protein sequence, read N- to C-terminus: Dihydroxy-acid dehydratase (611 aa).

Residue Asp-81 coordinates Mg(2+). Cys-122 is a binding site for [2Fe-2S] cluster. The Mg(2+) site is built by Asp-123 and Lys-124. Lys-124 is subject to N6-carboxylysine. Cys-195 is a [2Fe-2S] cluster binding site. Glu-491 contacts Mg(2+). Ser-517 acts as the Proton acceptor in catalysis.

It belongs to the IlvD/Edd family. As to quaternary structure, homodimer. [2Fe-2S] cluster serves as cofactor. Mg(2+) is required as a cofactor.

The enzyme catalyses (2R)-2,3-dihydroxy-3-methylbutanoate = 3-methyl-2-oxobutanoate + H2O. It catalyses the reaction (2R,3R)-2,3-dihydroxy-3-methylpentanoate = (S)-3-methyl-2-oxopentanoate + H2O. It functions in the pathway amino-acid biosynthesis; L-isoleucine biosynthesis; L-isoleucine from 2-oxobutanoate: step 3/4. The protein operates within amino-acid biosynthesis; L-valine biosynthesis; L-valine from pyruvate: step 3/4. In terms of biological role, functions in the biosynthesis of branched-chain amino acids. Catalyzes the dehydration of (2R,3R)-2,3-dihydroxy-3-methylpentanoate (2,3-dihydroxy-3-methylvalerate) into 2-oxo-3-methylpentanoate (2-oxo-3-methylvalerate) and of (2R)-2,3-dihydroxy-3-methylbutanoate (2,3-dihydroxyisovalerate) into 2-oxo-3-methylbutanoate (2-oxoisovalerate), the penultimate precursor to L-isoleucine and L-valine, respectively. This chain is Dihydroxy-acid dehydratase, found in Actinobacillus pleuropneumoniae serotype 3 (strain JL03).